Reading from the N-terminus, the 584-residue chain is AAA ATPase forming ring-shaped complexes (584 aa).

The stretch at 10 to 96 (AQSGTEHAEQ…LKENLDAVTH (87 aa)) forms a coiled coil. The disordered stretch occupies residues 40 to 66 (HQLQSAQRHAAGLSERRRAAEAQTQTA). Residue 292–297 (GTGKTM) coordinates ATP.

Belongs to the AAA ATPase family. Homohexamer. Assembles into a hexameric ring structure.

This chain is AAA ATPase forming ring-shaped complexes, found in Micrococcus luteus (strain ATCC 4698 / DSM 20030 / JCM 1464 / CCM 169 / CCUG 5858 / IAM 1056 / NBRC 3333 / NCIMB 9278 / NCTC 2665 / VKM Ac-2230) (Micrococcus lysodeikticus).